Consider the following 418-residue polypeptide: Light-independent protochlorophyllide reductase subunit N (418 aa).

Residues cysteine 17, cysteine 42, and cysteine 103 each contribute to the [4Fe-4S] cluster site.

Belongs to the BchN/ChlN family. As to quaternary structure, protochlorophyllide reductase is composed of three subunits; ChlL, ChlN and ChlB. Forms a heterotetramer of two ChlB and two ChlN subunits. [4Fe-4S] cluster is required as a cofactor.

It carries out the reaction chlorophyllide a + oxidized 2[4Fe-4S]-[ferredoxin] + 2 ADP + 2 phosphate = protochlorophyllide a + reduced 2[4Fe-4S]-[ferredoxin] + 2 ATP + 2 H2O. The protein operates within porphyrin-containing compound metabolism; chlorophyll biosynthesis (light-independent). Its function is as follows. Component of the dark-operative protochlorophyllide reductase (DPOR) that uses Mg-ATP and reduced ferredoxin to reduce ring D of protochlorophyllide (Pchlide) to form chlorophyllide a (Chlide). This reaction is light-independent. The NB-protein (ChlN-ChlB) is the catalytic component of the complex. In Prochlorococcus marinus (strain MIT 9211), this protein is Light-independent protochlorophyllide reductase subunit N.